Here is a 231-residue protein sequence, read N- to C-terminus: Deoxyribose-phosphate aldolase (231 aa).

Asp97 serves as the catalytic Proton donor/acceptor. The active-site Schiff-base intermediate with acetaldehyde is Lys162. Residue Lys191 is the Proton donor/acceptor of the active site.

This sequence belongs to the DeoC/FbaB aldolase family. DeoC type 1 subfamily.

The protein resides in the cytoplasm. The enzyme catalyses 2-deoxy-D-ribose 5-phosphate = D-glyceraldehyde 3-phosphate + acetaldehyde. Its pathway is carbohydrate degradation; 2-deoxy-D-ribose 1-phosphate degradation; D-glyceraldehyde 3-phosphate and acetaldehyde from 2-deoxy-alpha-D-ribose 1-phosphate: step 2/2. Catalyzes a reversible aldol reaction between acetaldehyde and D-glyceraldehyde 3-phosphate to generate 2-deoxy-D-ribose 5-phosphate. The chain is Deoxyribose-phosphate aldolase from Caldanaerobacter subterraneus subsp. tengcongensis (strain DSM 15242 / JCM 11007 / NBRC 100824 / MB4) (Thermoanaerobacter tengcongensis).